Consider the following 123-residue polypeptide: Large ribosomal subunit protein bL19c (123 aa).

It belongs to the bacterial ribosomal protein bL19 family.

It is found in the plastid. The protein resides in the chloroplast. In Porphyra purpurea (Red seaweed), this protein is Large ribosomal subunit protein bL19c (rpl19).